The chain runs to 273 residues: tRNA (guanine-N(7)-)-methyltransferase A (273 aa).

Positions 86, 109, 111, 142, 143, and 162 each coordinate S-adenosyl-L-methionine. The active site involves Asp165. The interval 166–174 is alphaC helix; the sequence is PHFKKTKHK. S-adenosyl-L-methionine is bound by residues Thr240 and Glu242. The tract at residues 240 to 248 is alpha6 helix; the sequence is TEEGKKVQR.

It belongs to the class I-like SAM-binding methyltransferase superfamily. TrmB family. In terms of assembly, catalytic component of the METTL1-WDR4 complex, composed of mettl1 and wdr4.

It is found in the nucleus. It carries out the reaction guanosine(46) in tRNA + S-adenosyl-L-methionine = N(7)-methylguanosine(46) in tRNA + S-adenosyl-L-homocysteine. It catalyses the reaction a guanosine in mRNA + S-adenosyl-L-methionine = an N(7)-methylguanosine in mRNA + S-adenosyl-L-homocysteine. The catalysed reaction is a guanosine in miRNA + S-adenosyl-L-methionine = an N(7)-methylguanosine in miRNA + S-adenosyl-L-homocysteine. The protein operates within tRNA modification; N(7)-methylguanine-tRNA biosynthesis. Catalytic component of METTL1-WDR4 methyltransferase complex that mediates the formation of N(7)-methylguanine in a subset of RNA species, such as tRNAs, mRNAs and microRNAs (miRNAs). Catalyzes the formation of N(7)-methylguanine at position 46 (m7G46) in a large subset of tRNAs that contain the 5'-RAGGU-3' motif within the variable loop. M7G46 interacts with C13-G22 in the D-loop to stabilize tRNA tertiary structure and protect tRNAs from decay. Also acts as a methyltransferase for a subset of internal N(7)-methylguanine in mRNAs. Internal N(7)-methylguanine methylation of mRNAs in response to stress promotes their relocalization to stress granules, thereby suppressing their translation. Also methylates a specific subset of miRNAs. The chain is tRNA (guanine-N(7)-)-methyltransferase A (mettl1-A) from Xenopus tropicalis (Western clawed frog).